Consider the following 347-residue polypeptide: Involucrin (347 aa).

Disordered regions lie at residues 1–43 and 56–347; these read MSQQ…LPAP and PLED…RRSL. A compositionally biased stretch (polar residues) spans 27–36; it reads ADTQQEQVKQ. Low complexity-rich tracts occupy residues 70–114 and 138–161; these read VPEQ…QQES and DQQQ…QQES. 2 stretches are compositionally biased toward basic and acidic residues: residues 164–173 and 212–221; these read QELHVDHHQQ. 2 stretches are compositionally biased toward low complexity: residues 222-241 and 265-285; these read QQES…QQES and DQQQ…QQQE. The span at 287–341 shows a compositional bias: basic and acidic residues; sequence QEDHQKAEHLEQEEAQREQQLKGQLEQEKKGVYQHLDQELTKRDEHLEKKGEHCW.

The protein belongs to the involucrin family. Directly or indirectly cross-linked to cornifelin (CNFN). In terms of processing, substrate of transglutaminase. Specific glutamines or lysines are cross-linked to keratins, desmoplakin and to inter involucrin molecules. Keratinocytes of epidermis and other stratified squamous epithelia.

It localises to the cytoplasm. Functionally, part of the insoluble cornified cell envelope (CE) of stratified squamous epithelia. In Sus scrofa (Pig), this protein is Involucrin (IVL).